The sequence spans 305 residues: tRNA dimethylallyltransferase (305 aa).

11–18 (GPTAVGKT) contacts ATP. 13-18 (TAVGKT) lines the substrate pocket. The segment at 36-39 (DSMQ) is interaction with substrate tRNA.

This sequence belongs to the IPP transferase family. In terms of assembly, monomer. The cofactor is Mg(2+).

It carries out the reaction adenosine(37) in tRNA + dimethylallyl diphosphate = N(6)-dimethylallyladenosine(37) in tRNA + diphosphate. In terms of biological role, catalyzes the transfer of a dimethylallyl group onto the adenine at position 37 in tRNAs that read codons beginning with uridine, leading to the formation of N6-(dimethylallyl)adenosine (i(6)A). This is tRNA dimethylallyltransferase from Listeria monocytogenes serovar 1/2a (strain ATCC BAA-679 / EGD-e).